Reading from the N-terminus, the 513-residue chain is ATP synthase subunit alpha (513 aa).

169-176 (GDRQCGKT) is a binding site for ATP.

This sequence belongs to the ATPase alpha/beta chains family. As to quaternary structure, F-type ATPases have 2 components, CF(1) - the catalytic core - and CF(0) - the membrane proton channel. CF(1) has five subunits: alpha(3), beta(3), gamma(1), delta(1), epsilon(1). CF(0) has three main subunits: a(1), b(2) and c(9-12). The alpha and beta chains form an alternating ring which encloses part of the gamma chain. CF(1) is attached to CF(0) by a central stalk formed by the gamma and epsilon chains, while a peripheral stalk is formed by the delta and b chains.

It is found in the cell inner membrane. It carries out the reaction ATP + H2O + 4 H(+)(in) = ADP + phosphate + 5 H(+)(out). Produces ATP from ADP in the presence of a proton gradient across the membrane. The alpha chain is a regulatory subunit. In Burkholderia ambifaria (strain MC40-6), this protein is ATP synthase subunit alpha.